Consider the following 39-residue polypeptide: Photosystem II reaction center protein J (39 aa).

The helical transmembrane segment at 7–27 (IPLWIVATVAGTGVLVVVGLF) threads the bilayer.

The protein belongs to the PsbJ family. As to quaternary structure, PSII is composed of 1 copy each of membrane proteins PsbA, PsbB, PsbC, PsbD, PsbE, PsbF, PsbH, PsbI, PsbJ, PsbK, PsbL, PsbM, PsbT, PsbX, PsbY, PsbZ, Psb30/Ycf12, peripheral proteins PsbO, CyanoQ (PsbQ), PsbU, PsbV and a large number of cofactors. It forms dimeric complexes.

The protein resides in the cellular thylakoid membrane. Its function is as follows. One of the components of the core complex of photosystem II (PSII). PSII is a light-driven water:plastoquinone oxidoreductase that uses light energy to abstract electrons from H(2)O, generating O(2) and a proton gradient subsequently used for ATP formation. It consists of a core antenna complex that captures photons, and an electron transfer chain that converts photonic excitation into a charge separation. This is Photosystem II reaction center protein J from Synechococcus elongatus (strain ATCC 33912 / PCC 7942 / FACHB-805) (Anacystis nidulans R2).